Reading from the N-terminus, the 340-residue chain is uncharacterized protein (340 aa).

Residues 6–26 form a helical membrane-spanning segment; that stretch reads ITFGLLVLMVCVILFVLYVQL.

Its subcellular location is the cell membrane. This is an uncharacterized protein from Bacillus subtilis (strain 168).